Reading from the N-terminus, the 591-residue chain is Aspartate--tRNA(Asp/Asn) ligase (591 aa).

Glu174 serves as a coordination point for L-aspartate. The interval 198 to 201 (QLFK) is aspartate. Residue Arg220 participates in L-aspartate binding. ATP is bound by residues 220 to 222 (RDE) and Gln229. Residue His450 participates in L-aspartate binding. Glu483 serves as a coordination point for ATP. An L-aspartate-binding site is contributed by Arg490. 535-538 (GLDR) is a binding site for ATP.

The protein belongs to the class-II aminoacyl-tRNA synthetase family. Type 1 subfamily. As to quaternary structure, homodimer.

The protein localises to the cytoplasm. The catalysed reaction is tRNA(Asx) + L-aspartate + ATP = L-aspartyl-tRNA(Asx) + AMP + diphosphate. Its function is as follows. Aspartyl-tRNA synthetase with relaxed tRNA specificity since it is able to aspartylate not only its cognate tRNA(Asp) but also tRNA(Asn). Reaction proceeds in two steps: L-aspartate is first activated by ATP to form Asp-AMP and then transferred to the acceptor end of tRNA(Asp/Asn). This Pseudomonas putida (strain W619) protein is Aspartate--tRNA(Asp/Asn) ligase.